We begin with the raw amino-acid sequence, 212 residues long: Protein ERP5 (212 aa).

Positions 1-20 (MKYNIVHGICLLFAITQAVG) are cleaved as a signal peptide. Residues 21–178 (AVHFYAKSGE…FRNQSESANS (158 aa)) are Lumenal-facing. Positions 31–124 (TKCFYEHLSR…TLRVFIELEI (94 aa)) constitute a GOLD domain. Residue asparagine 171 is glycosylated (N-linked (GlcNAc...) asparagine). The helical transmembrane segment at 179 to 199 (KIMTWSVFQLLILLGTCAFQL) threads the bilayer. Topologically, residues 200-212 (RYLKNFFVKQKVV) are cytoplasmic.

This sequence belongs to the EMP24/GP25L family.

It localises to the endoplasmic reticulum membrane. Functionally, involved in vesicular protein trafficking. This Saccharomyces cerevisiae (strain ATCC 204508 / S288c) (Baker's yeast) protein is Protein ERP5 (ERP5).